Reading from the N-terminus, the 428-residue chain is Serine--tRNA ligase (428 aa).

Position 237-239 (237-239 (TAE)) interacts with L-serine. 268–270 (RSE) provides a ligand contact to ATP. Glu291 contacts L-serine. Residue 355-358 (EISS) coordinates ATP. Ser390 contributes to the L-serine binding site.

This sequence belongs to the class-II aminoacyl-tRNA synthetase family. Type-1 seryl-tRNA synthetase subfamily. In terms of assembly, homodimer. The tRNA molecule binds across the dimer.

The protein resides in the cytoplasm. The catalysed reaction is tRNA(Ser) + L-serine + ATP = L-seryl-tRNA(Ser) + AMP + diphosphate + H(+). The enzyme catalyses tRNA(Sec) + L-serine + ATP = L-seryl-tRNA(Sec) + AMP + diphosphate + H(+). Its pathway is aminoacyl-tRNA biosynthesis; selenocysteinyl-tRNA(Sec) biosynthesis; L-seryl-tRNA(Sec) from L-serine and tRNA(Sec): step 1/1. Its function is as follows. Catalyzes the attachment of serine to tRNA(Ser). Is also able to aminoacylate tRNA(Sec) with serine, to form the misacylated tRNA L-seryl-tRNA(Sec), which will be further converted into selenocysteinyl-tRNA(Sec). The sequence is that of Serine--tRNA ligase from Hydrogenovibrio crunogenus (strain DSM 25203 / XCL-2) (Thiomicrospira crunogena).